The primary structure comprises 124 residues: Transcription initiation factor IIA subunit 2 (124 aa).

It belongs to the TFIIA subunit 2 family. TFIIA is a heterodimer composed of the large TOA1 and the small TOA2 subunits.

The protein resides in the nucleus. In terms of biological role, TFIIA is a component of the transcription machinery of RNA polymerase II and plays an important role in transcriptional activation. TFIIA in a complex with tbp mediates transcriptional activity. This is Transcription initiation factor IIA subunit 2 (TOA2) from Cryptococcus neoformans var. neoformans serotype D (strain JEC21 / ATCC MYA-565) (Filobasidiella neoformans).